A 75-amino-acid chain; its full sequence is RNA-binding protein KhpA (75 aa).

The 47-residue stretch at 29 to 75 (SIILELKVSPEDMGKVIGKQGRIAKAIRTVVKAAAIKENKKVVVEII) folds into the KH domain.

It belongs to the KhpA RNA-binding protein family. In terms of assembly, forms a complex with KhpB.

The protein resides in the cytoplasm. Its function is as follows. A probable RNA chaperone. Forms a complex with KhpB which binds to cellular RNA and controls its expression. Plays a role in peptidoglycan (PG) homeostasis and cell length regulation. In Clostridium perfringens (strain 13 / Type A), this protein is RNA-binding protein KhpA.